A 183-amino-acid polypeptide reads, in one-letter code: Inner membrane-spanning protein YciB (183 aa).

The next 5 helical transmembrane spans lie at 4 to 24, 50 to 70, 72 to 92, 119 to 139, and 149 to 169; these read FIEFIPLIVFFAVYKFYDIYM, MQLFTFLLVGFFGGLTVFFHD, TFIKWKVTVINVLFALGLLIS, VNLGWAGFFTVCGLLNLYVAF, and FKVFGLLGMTLVFTLLSGVYL.

The protein belongs to the YciB family.

It is found in the cell inner membrane. In terms of biological role, plays a role in cell envelope biogenesis, maintenance of cell envelope integrity and membrane homeostasis. This is Inner membrane-spanning protein YciB from Aeromonas hydrophila subsp. hydrophila (strain ATCC 7966 / DSM 30187 / BCRC 13018 / CCUG 14551 / JCM 1027 / KCTC 2358 / NCIMB 9240 / NCTC 8049).